Reading from the N-terminus, the 142-residue chain is Hemoglobin subunit zeta (142 aa).

N-acetylserine is present on Ser2. In terms of domain architecture, Globin spans 2–142 (SLTKTEGTII…VSSVLTEKYR (141 aa)). A Phosphothreonine modification is found at Thr29. Ser53 is subject to Phosphoserine. Residue His59 participates in heme b binding. Ser73 and Ser82 each carry phosphoserine. Position 88 (His88) interacts with heme b.

Belongs to the globin family. As to quaternary structure, heterotetramer of two zeta chains and beta-type chains.

The zeta chain is an alpha-type chain of mammalian embryonic hemoglobin. This Pan troglodytes (Chimpanzee) protein is Hemoglobin subunit zeta (HBZ1).